A 438-amino-acid polypeptide reads, in one-letter code: MGNNVVVLGTQWGDEGKGKIVDLLTEDAKYVVRYQGGHNAGHTLVIDGEKTVLHLIPSGILRDNVKCVIGNGVVLSPEALLKEMKPLEERGIPVRERLFISEACPLILPYHVAMDQAREIARGKKAIGTTGRGIGPAYEDKVARRGLRVGDLFDMEAFAEKLKEVMEYHNFQLVNFYKAEPVSYEAVLEEAKGYAELLTSMVIDVTDELDAARKRGDKIMFEGAQGTLLDIDHGTYPYVTSSNTTAGGVAAGSGFGPRHIGYILGIAKAYCTRVGAGPFPTELYDGLEKQDPVGKHLGTVGHEFGATTGRLRRTGWFDAVAMRRAIQINSVSGFCLTKLDVLDGLEELKICTGYKMEDGSVLEVSPMAAEAFEKATPIYETMPGWSENTFGAKSLDALPQAALNYIKRIEELTGVPVDIISTGPDRNETIIKVHPFEA.

GTP is bound by residues 13-19 and 41-43; these read GDEGKGK and GHT. The Proton acceptor role is filled by Asp14. Positions 14 and 41 each coordinate Mg(2+). IMP is bound by residues 14 to 17, 39 to 42, Thr130, Arg144, Gln225, Thr240, and Arg310; these read DEGK and NAGH. The Proton donor role is filled by His42. 306–312 provides a ligand contact to substrate; the sequence is ATTGRLR. Residues Arg312, 338–340, and 421–423 each bind GTP; these read KLD and STG.

Belongs to the adenylosuccinate synthetase family. Homodimer. Mg(2+) is required as a cofactor.

The protein localises to the cytoplasm. The enzyme catalyses IMP + L-aspartate + GTP = N(6)-(1,2-dicarboxyethyl)-AMP + GDP + phosphate + 2 H(+). It participates in purine metabolism; AMP biosynthesis via de novo pathway; AMP from IMP: step 1/2. Functionally, plays an important role in the de novo pathway of purine nucleotide biosynthesis. Catalyzes the first committed step in the biosynthesis of AMP from IMP. This is Adenylosuccinate synthetase from Vibrio parahaemolyticus serotype O3:K6 (strain RIMD 2210633).